Here is a 331-residue protein sequence, read N- to C-terminus: FMRFamide-related neuropeptides (331 aa).

Residues M1–A25 form the signal peptide. Residues F26–S65 constitute a propeptide that is removed on maturation. A phenylalanine amide mark is found at F71 and F83. Residues N86–D94 constitute a propeptide that is removed on maturation. F100 is modified (phenylalanine amide). The propeptide occupies A103–V168. The segment at Q122–R158 is disordered. Positions P146–R158 are enriched in basic and acidic residues. A phenylalanine amide mark is found at F174 and F181. Positions N184–E194 are excised as a propeptide. F200 carries the post-translational modification Phenylalanine amide. The propeptide occupies D203–E205. Phenylalanine amide is present on F211. The propeptide occupies S214–D216. F222 bears the Phenylalanine amide mark. A propeptide spanning residues N225 to D236 is cleaved from the precursor. The residue at position 242 (F242) is a Phenylalanine amide. A propeptide spanning residues G245–E254 is cleaved from the precursor. F260 carries the post-translational modification Phenylalanine amide. A propeptide spanning residues D263–E265 is cleaved from the precursor. Phenylalanine amide is present on F271. Positions S274–D277 are excised as a propeptide. The span at R282–F296 shows a compositional bias: basic and acidic residues. The segment at R282 to T310 is disordered. F283 is subject to Phenylalanine amide. Residues N286–D293 constitute a propeptide that is removed on maturation. F299 carries the phenylalanine amide modification. The propeptide occupies G302 to D312. Residue F318 is modified to Phenylalanine amide. The propeptide occupies S321–G331.

This sequence belongs to the FARP (FMRFamide related peptide) family.

It localises to the secreted. Excitatory neurotransmitters that directly modulate chromatophore function by activating chromatophore expansion at the chromatophore neuromuscular junction. In Doryteuthis pealeii (Longfin inshore squid), this protein is FMRFamide-related neuropeptides.